The sequence spans 338 residues: Ketol-acid reductoisomerase (NADP(+)) (338 aa).

A KARI N-terminal Rossmann domain is found at 1–181 (MNVFYDKDAD…GGGRAGIIET (181 aa)). Residues 24–27 (YGSQ), Arg47, and Ser52 each bind NADP(+). His107 is an active-site residue. Gly133 contacts NADP(+). Positions 182–327 (NFREETETDL…AKLRAMMPWI (146 aa)) constitute a KARI C-terminal knotted domain. The Mg(2+) site is built by Asp190, Glu194, Glu226, and Glu230. Ser251 lines the substrate pocket.

This sequence belongs to the ketol-acid reductoisomerase family. The cofactor is Mg(2+).

It carries out the reaction (2R)-2,3-dihydroxy-3-methylbutanoate + NADP(+) = (2S)-2-acetolactate + NADPH + H(+). The catalysed reaction is (2R,3R)-2,3-dihydroxy-3-methylpentanoate + NADP(+) = (S)-2-ethyl-2-hydroxy-3-oxobutanoate + NADPH + H(+). It participates in amino-acid biosynthesis; L-isoleucine biosynthesis; L-isoleucine from 2-oxobutanoate: step 2/4. It functions in the pathway amino-acid biosynthesis; L-valine biosynthesis; L-valine from pyruvate: step 2/4. Functionally, involved in the biosynthesis of branched-chain amino acids (BCAA). Catalyzes an alkyl-migration followed by a ketol-acid reduction of (S)-2-acetolactate (S2AL) to yield (R)-2,3-dihydroxy-isovalerate. In the isomerase reaction, S2AL is rearranged via a Mg-dependent methyl migration to produce 3-hydroxy-3-methyl-2-ketobutyrate (HMKB). In the reductase reaction, this 2-ketoacid undergoes a metal-dependent reduction by NADPH to yield (R)-2,3-dihydroxy-isovalerate. The sequence is that of Ketol-acid reductoisomerase (NADP(+)) from Burkholderia multivorans (strain ATCC 17616 / 249).